A 684-amino-acid chain; its full sequence is Leishmanolysin-like peptidase (684 aa).

Histidine 257 contributes to the Zn(2+) binding site. Glutamate 258 is a catalytic residue. Residues histidine 261 and histidine 364 each contribute to the Zn(2+) site.

This sequence belongs to the peptidase M8 family. Zn(2+) is required as a cofactor.

The protein resides in the cytoplasm. Essential for the coordination of mitotic progression, and also plays a role in cell migration. In Drosophila pseudoobscura pseudoobscura (Fruit fly), this protein is Leishmanolysin-like peptidase.